Here is a 459-residue protein sequence, read N- to C-terminus: Ribulose bisphosphate carboxylase large chain (459 aa).

Lys-4 is subject to N6,N6,N6-trimethyllysine. Positions 113 and 163 each coordinate substrate. Lys-165 (proton acceptor) is an active-site residue. Lys-167 lines the substrate pocket. Residues Lys-191, Asp-193, and Glu-194 each coordinate Mg(2+). The residue at position 191 (Lys-191) is an N6-carboxylysine. The active-site Proton acceptor is the His-284. Substrate is bound by residues Arg-285, His-317, and Ser-369.

It belongs to the RuBisCO large chain family. Type I subfamily. In terms of assembly, heterohexadecamer of 8 large chains and 8 small chains; disulfide-linked. The disulfide link is formed within the large subunit homodimers. The cofactor is Mg(2+). The disulfide bond which can form in the large chain dimeric partners within the hexadecamer appears to be associated with oxidative stress and protein turnover.

Its subcellular location is the plastid. The protein resides in the chloroplast. It catalyses the reaction 2 (2R)-3-phosphoglycerate + 2 H(+) = D-ribulose 1,5-bisphosphate + CO2 + H2O. The catalysed reaction is D-ribulose 1,5-bisphosphate + O2 = 2-phosphoglycolate + (2R)-3-phosphoglycerate + 2 H(+). RuBisCO catalyzes two reactions: the carboxylation of D-ribulose 1,5-bisphosphate, the primary event in carbon dioxide fixation, as well as the oxidative fragmentation of the pentose substrate in the photorespiration process. Both reactions occur simultaneously and in competition at the same active site. The chain is Ribulose bisphosphate carboxylase large chain from Garrya elliptica (Wavyleaf silktassel).